The primary structure comprises 912 residues: DNA ligase 4 (912 aa).

Residues glutamate 276, threonine 277, lysine 278, leucine 279, arginine 283, glutamate 336, lysine 350, phenylalanine 372, glutamate 432, lysine 437, lysine 454, and lysine 456 each contribute to the ATP site. Lysine 278 (N6-AMP-lysine intermediate) is an active-site residue. Glutamate 336 lines the Mg(2+) pocket. Residue glutamate 432 participates in Mg(2+) binding. The interval 615 to 625 (LASKHLYIDEY) is required for catalytic activity. BRCT domains lie at 659–748 (KVSS…PAFM) and 809–912 (CKLC…QFLI).

This sequence belongs to the ATP-dependent DNA ligase family. Interacts with XRCC4; the LIG4-XRCC4 subcomplex has a 1:2 stoichiometry. Component of the core long-range non-homologous end joining (NHEJ) complex (also named DNA-PK complex) composed of PRKDC, LIG4, XRCC4, XRCC6/Ku70, XRCC5/Ku86 and NHEJ1/XLF. Additional component of the NHEJ complex includes PAXX. Following autophosphorylation, PRKDC dissociates from DNA, leading to formation of the short-range NHEJ complex, composed of LIG4, XRCC4, XRCC6/Ku70, XRCC5/Ku86 and NHEJ1/XLF. Mg(2+) is required as a cofactor.

Its subcellular location is the nucleus. The enzyme catalyses ATP + (deoxyribonucleotide)n-3'-hydroxyl + 5'-phospho-(deoxyribonucleotide)m = (deoxyribonucleotide)n+m + AMP + diphosphate.. In terms of biological role, DNA ligase involved in DNA non-homologous end joining (NHEJ); required for double-strand break (DSB) repair and V(D)J recombination. Catalyzes the NHEJ ligation step of the broken DNA during DSB repair by resealing the DNA breaks after the gap filling is completed. Joins single-strand breaks in a double-stranded polydeoxynucleotide in an ATP-dependent reaction. LIG4 is mechanistically flexible: it can ligate nicks as well as compatible DNA overhangs alone, while in the presence of XRCC4, it can ligate ends with 2-nucleotides (nt) microhomology and 1-nt gaps. Forms a subcomplex with XRCC4; the LIG4-XRCC4 subcomplex is responsible for the NHEJ ligation step and XRCC4 enhances the joining activity of LIG4. The polypeptide is DNA ligase 4 (Gallus gallus (Chicken)).